Reading from the N-terminus, the 369-residue chain is Homoserine O-acetyltransferase (369 aa).

In terms of domain architecture, AB hydrolase-1 spans 44–350 (NAILVAHAWT…AYGHDAFLLE (307 aa)). Residue serine 150 is the Nucleophile of the active site. Arginine 217 contributes to the substrate binding site. Residues aspartate 311 and histidine 344 contribute to the active site. Position 345 (aspartate 345) interacts with substrate.

This sequence belongs to the AB hydrolase superfamily. MetX family. Homodimer.

It localises to the cytoplasm. The catalysed reaction is L-homoserine + acetyl-CoA = O-acetyl-L-homoserine + CoA. It participates in amino-acid biosynthesis; L-methionine biosynthesis via de novo pathway; O-acetyl-L-homoserine from L-homoserine: step 1/1. Its function is as follows. Transfers an acetyl group from acetyl-CoA to L-homoserine, forming acetyl-L-homoserine. This Geobacter metallireducens (strain ATCC 53774 / DSM 7210 / GS-15) protein is Homoserine O-acetyltransferase.